Consider the following 202-residue polypeptide: Pyridoxal 5'-phosphate synthase subunit PdxT (202 aa).

52 to 54 (GES) contributes to the L-glutamine binding site. The active-site Nucleophile is the Cys-84. L-glutamine contacts are provided by residues Arg-116 and 143–144 (IR). Active-site charge relay system residues include His-184 and Glu-186.

The protein belongs to the glutaminase PdxT/SNO family. As to quaternary structure, in the presence of PdxS, forms a dodecamer of heterodimers. Only shows activity in the heterodimer.

It carries out the reaction aldehydo-D-ribose 5-phosphate + D-glyceraldehyde 3-phosphate + L-glutamine = pyridoxal 5'-phosphate + L-glutamate + phosphate + 3 H2O + H(+). The enzyme catalyses L-glutamine + H2O = L-glutamate + NH4(+). It participates in cofactor biosynthesis; pyridoxal 5'-phosphate biosynthesis. Catalyzes the hydrolysis of glutamine to glutamate and ammonia as part of the biosynthesis of pyridoxal 5'-phosphate. The resulting ammonia molecule is channeled to the active site of PdxS. The protein is Pyridoxal 5'-phosphate synthase subunit PdxT of Pyrobaculum neutrophilum (strain DSM 2338 / JCM 9278 / NBRC 100436 / V24Sta) (Thermoproteus neutrophilus).